A 412-amino-acid polypeptide reads, in one-letter code: uncharacterized protein (412 aa).

In terms of domain architecture, UmuC spans 20-199 (FFYFDFDAFF…LPIVELPGIG (180 aa)).

Belongs to the DNA polymerase type-Y family.

This is an uncharacterized protein from Mycoplasma pneumoniae (strain ATCC 29342 / M129 / Subtype 1) (Mycoplasmoides pneumoniae).